A 43-amino-acid chain; its full sequence is Avenin-F (43 aa).

The tract at residues threonine 1–valine 23 is disordered. A compositionally biased stretch (low complexity) spans glutamate 10–valine 23. The stretch at proline 21–glutamine 26 is repeat 1. Residues proline 21–glutamine 40 form a 3 X 6 aa tandem repeats of P-F-V-Q-Q-Q region. A 2; approximate repeat occupies proline 27–glutamine 34. Copy 3 of the repeat occupies proline 35–glutamine 40.

It belongs to the gliadin/glutenin family. Monomer.

It localises to the vacuole. The protein resides in the aleurone grain. Its function is as follows. Seed storage protein. Serves as a source of nitrogen, carbon, and sulfur for the young developing seedling. The polypeptide is Avenin-F (Avena sativa (Oat)).